The primary structure comprises 175 residues: ATP synthase subunit b 1 (175 aa).

Residues 26–48 (IINLAIIIGVLYVYGSKFIGNIL) form a helical membrane-spanning segment.

Belongs to the ATPase B chain family. As to quaternary structure, F-type ATPases have 2 components, F(1) - the catalytic core - and F(0) - the membrane proton channel. F(1) has five subunits: alpha(3), beta(3), gamma(1), delta(1), epsilon(1). F(0) has four main subunits: a(1), b(1), b'(1) and c(10-14). The alpha and beta chains form an alternating ring which encloses part of the gamma chain. F(1) is attached to F(0) by a central stalk formed by the gamma and epsilon chains, while a peripheral stalk is formed by the delta, b and b' chains.

It is found in the cellular thylakoid membrane. F(1)F(0) ATP synthase produces ATP from ADP in the presence of a proton or sodium gradient. F-type ATPases consist of two structural domains, F(1) containing the extramembraneous catalytic core and F(0) containing the membrane proton channel, linked together by a central stalk and a peripheral stalk. During catalysis, ATP synthesis in the catalytic domain of F(1) is coupled via a rotary mechanism of the central stalk subunits to proton translocation. Functionally, component of the F(0) channel, it forms part of the peripheral stalk, linking F(1) to F(0). The chain is ATP synthase subunit b 1 from Picosynechococcus sp. (strain ATCC 27264 / PCC 7002 / PR-6) (Agmenellum quadruplicatum).